A 160-amino-acid polypeptide reads, in one-letter code: Cytochrome b6-f complex subunit 4 (160 aa).

The next 3 helical transmembrane spans lie at 36-56 (ILFT…GLAI), 95-115 (LLGI…PFIE), and 131-151 (AVFL…CFPI).

It belongs to the cytochrome b family. PetD subfamily. The 4 large subunits of the cytochrome b6-f complex are cytochrome b6, subunit IV (17 kDa polypeptide, PetD), cytochrome f and the Rieske protein, while the 4 small subunits are PetG, PetL, PetM and PetN. The complex functions as a dimer.

Its subcellular location is the cellular thylakoid membrane. Its function is as follows. Component of the cytochrome b6-f complex, which mediates electron transfer between photosystem II (PSII) and photosystem I (PSI), cyclic electron flow around PSI, and state transitions. The chain is Cytochrome b6-f complex subunit 4 from Picosynechococcus sp. (strain ATCC 27264 / PCC 7002 / PR-6) (Agmenellum quadruplicatum).